The following is a 901-amino-acid chain: Inner capsid protein VP3 (901 aa).

It belongs to the turreted BTV-fold inner capsid family. In terms of assembly, homodecamer; each decamer is made up of two conformers of VP2, called VP2A and VP2B. 12 homodecamers assemble to form an icosahedral capsid.

It is found in the virion. Functionally, inner capsid protein that self-assembles to form an icosahedral capsid with a T=2 symmetry, which consists of 120 copies of VP2, with channels at each of its five-fold vertices. This capsid constitutes the innermost concentric layer of the viral mature particle. In Bluetongue virus 13 (isolate USA) (BTV 13), this protein is Inner capsid protein VP3 (Segment-3).